The primary structure comprises 820 residues: Leucine--tRNA ligase (820 aa).

The 'HIGH' region motif lies at 42 to 52 (PYPSGDLHMGH). The short motif at 576–580 (KMSKS) is the 'KMSKS' region element. Residue lysine 579 participates in ATP binding.

This sequence belongs to the class-I aminoacyl-tRNA synthetase family.

It is found in the cytoplasm. The catalysed reaction is tRNA(Leu) + L-leucine + ATP = L-leucyl-tRNA(Leu) + AMP + diphosphate. The protein is Leucine--tRNA ligase of Coxiella burnetii (strain RSA 493 / Nine Mile phase I).